The sequence spans 173 residues: Bifunctional protein PyrR (173 aa).

The PRPP-binding motif lies at 93–105 (VILVDDVLYTGRT).

Belongs to the purine/pyrimidine phosphoribosyltransferase family. PyrR subfamily. In terms of assembly, homodimer and homohexamer; in equilibrium.

The catalysed reaction is UMP + diphosphate = 5-phospho-alpha-D-ribose 1-diphosphate + uracil. Its function is as follows. Regulates transcriptional attenuation of the pyrimidine nucleotide (pyr) operon by binding in a uridine-dependent manner to specific sites on pyr mRNA. This disrupts an antiterminator hairpin in the RNA and favors formation of a downstream transcription terminator, leading to a reduced expression of downstream genes. In terms of biological role, also displays a weak uracil phosphoribosyltransferase activity which is not physiologically significant. This Streptococcus suis (strain 05ZYH33) protein is Bifunctional protein PyrR.